A 260-amino-acid polypeptide reads, in one-letter code: Small ribosomal subunit protein eS1 (260 aa).

Lys30 carries the post-translational modification N6-acetyllysine; alternate. Residue Lys30 forms a Glycyl lysine isopeptide (Lys-Gly) (interchain with G-Cter in SUMO2); alternate linkage. Lys52 bears the N6-acetyllysine mark. At Tyr151 the chain carries ADP-ribosyltyrosine. Positions His228–Val260 are disordered. Ser232 and Ser233 each carry phosphoserine. Basic and acidic residues predominate over residues Thr238–Gly251. At Lys245 the chain carries N6-acetyllysine; alternate. Lys245 is covalently cross-linked (Glycyl lysine isopeptide (Lys-Gly) (interchain with G-Cter in SUMO2); alternate). Position 252 is a phosphotyrosine (Tyr252). Ser259 carries the post-translational modification Phosphoserine.

The protein belongs to the eukaryotic ribosomal protein eS1 family. Component of the small ribosomal subunit. Mature ribosomes consist of a small (40S) and a large (60S) subunit. The 40S subunit contains about 33 different proteins and 1 molecule of RNA (18S). The 60S subunit contains about 49 different proteins and 3 molecules of RNA (28S, 5.8S and 5S). Identified in a IGF2BP1-dependent mRNP granule complex containing untranslated mRNAs. Binds with high affinity to IPO4. Interacts with DDIT3. Part of the small subunit (SSU) processome, composed of more than 70 proteins and the RNA chaperone small nucleolar RNA (snoRNA) U3. ADP-ribosylated at Tyr-151 by PARP1 in presence of HPF1.

The protein resides in the cytoplasm. The protein localises to the nucleus. Its subcellular location is the nucleolus. Functionally, component of the small ribosomal subunit. The ribosome is a large ribonucleoprotein complex responsible for the synthesis of proteins in the cell. Part of the small subunit (SSU) processome, first precursor of the small eukaryotic ribosomal subunit. During the assembly of the SSU processome in the nucleolus, many ribosome biogenesis factors, an RNA chaperone and ribosomal proteins associate with the nascent pre-rRNA and work in concert to generate RNA folding, modifications, rearrangements and cleavage as well as targeted degradation of pre-ribosomal RNA by the RNA exosome. May play a role during erythropoiesis through regulation of transcription factor DDIT3. The sequence is that of Small ribosomal subunit protein eS1 from Felis catus (Cat).